A 272-amino-acid chain; its full sequence is METYAVFGNPIAHSKSPFIHQQFAQQLDIVHPYGRVLAPINNFINTLDAFFAAGGKGANITVPFKEEAFARSDELTERASLAGAVNTLKRLEDGRLLGDNTDGIGLLGDLERLNFIRPGLRILLIGAGGASRGVLLPLLSLDCAVTITNRTASRAEALAKIFAHTGSVHATDMDKLDGCEFDLIINATSSGIRGEIPAIPASLIHPSLCCYDMFYQKGNTPFLSWCVQQGAKRYADGLGMLVGQAAHAVLLWHGVLPQVEPVIEQLQQELLA.

Shikimate contacts are provided by residues 14–16 (SKS) and threonine 61. The Proton acceptor role is filled by lysine 65. Glutamate 77 contributes to the NADP(+) binding site. The shikimate site is built by asparagine 86 and aspartate 102. Residues 126–130 (GAGGA), 149–154 (NRTASR), and methionine 213 each bind NADP(+). Position 215 (tyrosine 215) interacts with shikimate. Glycine 237 provides a ligand contact to NADP(+).

It belongs to the shikimate dehydrogenase family. As to quaternary structure, homodimer.

The enzyme catalyses shikimate + NADP(+) = 3-dehydroshikimate + NADPH + H(+). It functions in the pathway metabolic intermediate biosynthesis; chorismate biosynthesis; chorismate from D-erythrose 4-phosphate and phosphoenolpyruvate: step 4/7. In terms of biological role, involved in the biosynthesis of the chorismate, which leads to the biosynthesis of aromatic amino acids. Catalyzes the reversible NADPH linked reduction of 3-dehydroshikimate (DHSA) to yield shikimate (SA). This is Shikimate dehydrogenase (NADP(+)) from Salmonella typhimurium (strain LT2 / SGSC1412 / ATCC 700720).